Here is a 217-residue protein sequence, read N- to C-terminus: Large ribosomal subunit protein uL3 (217 aa).

Residues 137–160 are disordered; the sequence is VSASHGSHRNHRKPGSIGASSTPS.

This sequence belongs to the universal ribosomal protein uL3 family. As to quaternary structure, part of the 50S ribosomal subunit. Forms a cluster with proteins L14 and L19.

Its function is as follows. One of the primary rRNA binding proteins, it binds directly near the 3'-end of the 23S rRNA, where it nucleates assembly of the 50S subunit. The polypeptide is Large ribosomal subunit protein uL3 (Clavibacter sepedonicus (Clavibacter michiganensis subsp. sepedonicus)).